Reading from the N-terminus, the 497-residue chain is Glycerol kinase (497 aa).

Threonine 11 serves as a coordination point for ADP. ATP contacts are provided by threonine 11, threonine 12, and serine 13. Sn-glycerol 3-phosphate is bound at residue threonine 11. Arginine 15 is an ADP binding site. Residues arginine 81, glutamate 82, tyrosine 134, and aspartate 244 each contribute to the sn-glycerol 3-phosphate site. 5 residues coordinate glycerol: arginine 81, glutamate 82, tyrosine 134, aspartate 244, and glutamine 245. Threonine 266 and glycine 309 together coordinate ADP. ATP contacts are provided by threonine 266, glycine 309, glutamine 313, and glycine 410. Residues glycine 410 and asparagine 414 each contribute to the ADP site.

This sequence belongs to the FGGY kinase family.

The enzyme catalyses glycerol + ATP = sn-glycerol 3-phosphate + ADP + H(+). The protein operates within polyol metabolism; glycerol degradation via glycerol kinase pathway; sn-glycerol 3-phosphate from glycerol: step 1/1. With respect to regulation, inhibited by fructose 1,6-bisphosphate (FBP). In terms of biological role, key enzyme in the regulation of glycerol uptake and metabolism. Catalyzes the phosphorylation of glycerol to yield sn-glycerol 3-phosphate. The sequence is that of Glycerol kinase from Fusobacterium nucleatum subsp. nucleatum (strain ATCC 25586 / DSM 15643 / BCRC 10681 / CIP 101130 / JCM 8532 / KCTC 2640 / LMG 13131 / VPI 4355).